The primary structure comprises 133 residues: Small ribosomal subunit protein uS8 (133 aa).

It belongs to the universal ribosomal protein uS8 family. As to quaternary structure, part of the 30S ribosomal subunit.

In terms of biological role, one of the primary rRNA binding proteins, it binds directly to 16S rRNA central domain where it helps coordinate assembly of the platform of the 30S subunit. This chain is Small ribosomal subunit protein uS8, found in Hyperthermus butylicus (strain DSM 5456 / JCM 9403 / PLM1-5).